We begin with the raw amino-acid sequence, 435 residues long: Hydrogenobyrinate a,c-diamide synthase (435 aa).

A GATase cobBQ-type domain is found at 247 to 435 (RIALARDAAF…TGSFFHLIAG (189 aa)). Residue Cys329 is the Nucleophile of the active site.

It belongs to the CobB/CbiA family. Mg(2+) is required as a cofactor.

It carries out the reaction hydrogenobyrinate + 2 L-glutamine + 2 ATP + 2 H2O = hydrogenobyrinate a,c-diamide + 2 L-glutamate + 2 ADP + 2 phosphate + 2 H(+). Its pathway is cofactor biosynthesis; adenosylcobalamin biosynthesis; cob(II)yrinate a,c-diamide from precorrin-2 (aerobic route): step 9/10. Its function is as follows. Catalyzes the ATP-dependent amidation of the two carboxylate groups at positions a and c of hydrogenobyrinate, using either L-glutamine or ammonia as the nitrogen source. In Rhodobacter capsulatus (strain ATCC BAA-309 / NBRC 16581 / SB1003), this protein is Hydrogenobyrinate a,c-diamide synthase.